Reading from the N-terminus, the 553-residue chain is Zinc finger matrin-type protein 1 (553 aa).

The interval 16-36 (TPSSPAATCSGPMAGGDTSSN) is disordered. 4 consecutive Matrin-type zinc fingers follow at residues 61-91 (TFCKVCNAVLQFESHRISHYEGKKHAQKVRL), 125-155 (KFCGLCNMVFSSPVVAQTHYVGKVHAKKMRQ), 223-253 (KYCKLCCASFNKALVAQQHYSGKKHARNQAR), and 275-305 (YVCPICNITLTSIEMYQSHMQGNKHQIKESM). Disordered regions lie at residues 341-402 (QFRQ…DQRV) and 428-553 (HISR…ILGF). A compositionally biased stretch (acidic residues) spans 350-362 (DSCDYEEEEEQEP). The segment covering 431 to 453 (RSPTSQDSSDNSSGSSSDESSGS) has biased composition (low complexity). A compositionally biased stretch (basic residues) spans 456–476 (KDKRRKRKHHRESRLRGSGRI). Basic and acidic residues predominate over residues 477-513 (RRGDENSEKRKRKGEDADSGKEDNKHDRGKTSGGDKD).

It localises to the nucleus. This is Zinc finger matrin-type protein 1 (zmat1) from Xenopus tropicalis (Western clawed frog).